We begin with the raw amino-acid sequence, 206 residues long: MIASLRGTVINIGLSSAVIECNGVGYEVVTTPNTLSQLVRGEEALVLTTMVVREDAMKLYGFIDNESREMFSVLQTVSGLGPRLALACESVLSPLEISQAITNADAKALQRVPGVGKRMADRLIVELKGKVAAFAAGVVDEAGEQISLPNANIASEVVVEQVSQALVGLGFSEKQSDDAVSFVLAADPSLDTSGALRAALAKLSGK.

The tract at residues 1-63 is domain I; that stretch reads MIASLRGTVI…EDAMKLYGFI (63 aa). Residues 64 to 142 form a domain II region; the sequence is DNESREMFSV…AFAAGVVDEA (79 aa). The tract at residues 143–153 is flexible linker; it reads GEQISLPNANI. The domain III stretch occupies residues 154 to 206; it reads ASEVVVEQVSQALVGLGFSEKQSDDAVSFVLAADPSLDTSGALRAALAKLSGK.

This sequence belongs to the RuvA family. In terms of assembly, homotetramer. Forms an RuvA(8)-RuvB(12)-Holliday junction (HJ) complex. HJ DNA is sandwiched between 2 RuvA tetramers; dsDNA enters through RuvA and exits via RuvB. An RuvB hexamer assembles on each DNA strand where it exits the tetramer. Each RuvB hexamer is contacted by two RuvA subunits (via domain III) on 2 adjacent RuvB subunits; this complex drives branch migration. In the full resolvosome a probable DNA-RuvA(4)-RuvB(12)-RuvC(2) complex forms which resolves the HJ.

Its subcellular location is the cytoplasm. The RuvA-RuvB-RuvC complex processes Holliday junction (HJ) DNA during genetic recombination and DNA repair, while the RuvA-RuvB complex plays an important role in the rescue of blocked DNA replication forks via replication fork reversal (RFR). RuvA specifically binds to HJ cruciform DNA, conferring on it an open structure. The RuvB hexamer acts as an ATP-dependent pump, pulling dsDNA into and through the RuvAB complex. HJ branch migration allows RuvC to scan DNA until it finds its consensus sequence, where it cleaves and resolves the cruciform DNA. The protein is Holliday junction branch migration complex subunit RuvA of Corynebacterium glutamicum (strain R).